The sequence spans 230 residues: Small ribosomal subunit protein uS3c (230 aa).

In terms of domain architecture, KH type-2 spans 39 to 109 (IRSFIHGKLS…QIRVNVVEIS (71 aa)).

It belongs to the universal ribosomal protein uS3 family. Part of the 30S ribosomal subunit.

The protein localises to the plastid. It localises to the chloroplast. This is Small ribosomal subunit protein uS3c (rps3) from Porphyra purpurea (Red seaweed).